A 160-amino-acid polypeptide reads, in one-letter code: Probable NADH dehydrogenase [ubiquinone] 1 beta subcomplex subunit 2, mitochondrial (160 aa).

The protein belongs to the complex I NDUFB2 subunit family. In terms of assembly, complex I is composed of 45 different subunits.

The protein localises to the mitochondrion inner membrane. In terms of biological role, accessory subunit of the mitochondrial membrane respiratory chain NADH dehydrogenase (Complex I), that is believed not to be involved in catalysis. Complex I functions in the transfer of electrons from NADH to the respiratory chain. The immediate electron acceptor for the enzyme is believed to be ubiquinone. The polypeptide is Probable NADH dehydrogenase [ubiquinone] 1 beta subcomplex subunit 2, mitochondrial (Caenorhabditis elegans).